The primary structure comprises 524 residues: RNA-splicing ligase RtcB homolog 2 (524 aa).

Residues Asp-141, Cys-144, His-249, His-281, and His-372 each contribute to the Mn(2+) site. A GMP-binding site is contributed by 248–252 (NHYLE). GMP-binding positions include 372–373 (HN), 421–424 (GGSM), Ser-428, 447–450 (HGAG), and Lys-523. His-447 (GMP-histidine intermediate) is an active-site residue.

Belongs to the RtcB family. As to quaternary structure, catalytic component of the tRNA-splicing ligase complex. It depends on Mn(2+) as a cofactor.

It carries out the reaction a 3'-end 3'-phospho-ribonucleotide-RNA + a 5'-end dephospho-ribonucleoside-RNA + GTP = a ribonucleotidyl-ribonucleotide-RNA + GMP + diphosphate. It catalyses the reaction a 3'-end 2',3'-cyclophospho-ribonucleotide-RNA + a 5'-end dephospho-ribonucleoside-RNA + GTP + H2O = a ribonucleotidyl-ribonucleotide-RNA + GMP + diphosphate + H(+). Catalytic subunit of the tRNA-splicing ligase complex that acts by directly joining spliced tRNA halves to mature-sized tRNAs by incorporating the precursor-derived splice junction phosphate into the mature tRNA as a canonical 3',5'-phosphodiester. May act as an RNA ligase with broad substrate specificity, and may function toward other RNAs. This Entamoeba dispar (strain ATCC PRA-260 / SAW760) protein is RNA-splicing ligase RtcB homolog 2.